The following is a 241-amino-acid chain: Platelet-derived growth factor subunit B (241 aa).

A signal peptide spans 1-20; it reads MNRCWALFLSLCCYLRLVSA. The propeptide at 21–81 is removed in mature form; that stretch reads EGDPIPEELY…ELESLARGRR (61 aa). Asn-63 carries N-linked (GlcNAc...) asparagine glycosylation. 3 disulfides stabilise this stretch: Cys-97/Cys-141, Cys-130/Cys-178, and Cys-134/Cys-180. The propeptide at 191–241 is removed in mature form; sequence RSPGGSQEQRAKTPQTRVTIRTVRVRRPPKGKHRKFKHTHDKTALKETLGA. A compositionally biased stretch (basic residues) spans 216-230; that stretch reads RRPPKGKHRKFKHTH. The interval 216 to 241 is disordered; it reads RRPPKGKHRKFKHTHDKTALKETLGA.

This sequence belongs to the PDGF/VEGF growth factor family. In terms of assembly, antiparallel homodimer; disulfide-linked. Antiparallel heterodimer with PDGFA; disulfide-linked. The PDGFB homodimer interacts with PDGFRA and PDGFRB homodimers, and with heterodimers formed by PDGFRA and PDGFRB. The heterodimer composed of PDGFA and PDGFB interacts with PDGFRB homodimers, and with heterodimers formed by PDGFRA and PDGFRB. Interacts with XLKD1. Interacts with LRP1. Interacts with SORL1 (via the N-terminal ectodomain). Interacts with CD82; this interaction inhibits PDGFB-mediated signaling pathway. As to expression, expressed at high levels in the heart, brain (sustantia nigra), placenta and fetal kidney. Expressed at moderate levels in the brain (hippocampus), skeletal muscle, kidney and lung.

It localises to the secreted. In terms of biological role, growth factor that plays an essential role in the regulation of embryonic development, cell proliferation, cell migration, survival and chemotaxis. Potent mitogen for cells of mesenchymal origin. Required for normal proliferation and recruitment of pericytes and vascular smooth muscle cells in the central nervous system, skin, lung, heart and placenta. Required for normal blood vessel development, and for normal development of kidney glomeruli. Plays an important role in wound healing. Signaling is modulated by the formation of heterodimers with PDGFA. The polypeptide is Platelet-derived growth factor subunit B (PDGFB) (Homo sapiens (Human)).